The primary structure comprises 367 residues: tRNA-specific 2-thiouridylase MnmA 2 (367 aa).

ATP is bound by residues 10 to 17 and Met-36; that span reads GMSGGVDS. The interaction with target base in tRNA stretch occupies residues 96-98; that stretch reads NPD. Catalysis depends on Cys-101, which acts as the Nucleophile. Cysteines 101 and 197 form a disulfide. Gly-125 is a binding site for ATP. The interval 147–149 is interaction with tRNA; that stretch reads KDQ. Cys-197 (cysteine persulfide intermediate) is an active-site residue. Residues 314–315 are interaction with tRNA; that stretch reads RY.

The protein belongs to the MnmA/TRMU family.

It is found in the cytoplasm. It catalyses the reaction S-sulfanyl-L-cysteinyl-[protein] + uridine(34) in tRNA + AH2 + ATP = 2-thiouridine(34) in tRNA + L-cysteinyl-[protein] + A + AMP + diphosphate + H(+). In terms of biological role, catalyzes the 2-thiolation of uridine at the wobble position (U34) of tRNA, leading to the formation of s(2)U34. The chain is tRNA-specific 2-thiouridylase MnmA 2 from Aliarcobacter butzleri (strain RM4018) (Arcobacter butzleri).